We begin with the raw amino-acid sequence, 366 residues long: Histidinol-phosphate aminotransferase (366 aa).

An N6-(pyridoxal phosphate)lysine modification is found at Lys-228.

Belongs to the class-II pyridoxal-phosphate-dependent aminotransferase family. Histidinol-phosphate aminotransferase subfamily. Homodimer. The cofactor is pyridoxal 5'-phosphate.

The enzyme catalyses L-histidinol phosphate + 2-oxoglutarate = 3-(imidazol-4-yl)-2-oxopropyl phosphate + L-glutamate. The protein operates within amino-acid biosynthesis; L-histidine biosynthesis; L-histidine from 5-phospho-alpha-D-ribose 1-diphosphate: step 7/9. The chain is Histidinol-phosphate aminotransferase from Campylobacter fetus subsp. fetus (strain 82-40).